We begin with the raw amino-acid sequence, 274 residues long: Large ribosomal subunit protein uL2cy (274 aa).

2 disordered regions span residues 1 to 25 and 223 to 274; these read MAIHLYKTSTPSTRNGTVDSQVKSN and MNPV…RRSK. A compositionally biased stretch (polar residues) spans 7–25; it reads KTSTPSTRNGTVDSQVKSN.

This sequence belongs to the universal ribosomal protein uL2 family. In terms of assembly, part of the 50S ribosomal subunit.

It is found in the plastid. Its subcellular location is the chloroplast. The polypeptide is Large ribosomal subunit protein uL2cy (rpl2-B) (Atropa belladonna (Belladonna)).